The primary structure comprises 1015 residues: SKI family transcriptional corepressor 2 (1015 aa).

Disordered stretches follow at residues 280–316 and 518–934; these read HLLGAPPPPPPPPPPLAELAGAPHAHHKRPRFDDDDD and GAAG…KKDV. Pro residues predominate over residues 284 to 295; the sequence is APPPPPPPPPPL. Residues 575 to 600 show a composition bias toward low complexity; the sequence is PPADSVAAAGAGAAAAGSGPAGSRVP. Positions 628-637 are enriched in basic and acidic residues; sequence GGKDDAESLA. Positions 653 to 669 are enriched in basic residues; sequence HPHHHHHPHHHHHHHHP. Pro residues-rich tracts occupy residues 670–684 and 694–708; these read PQPPSPLLLLPPQPD and APPPPPPPPPPPPLA. Acidic residues-rich tracts occupy residues 730-745 and 754-774; these read DSSEDEDDEEEEQEVD and GEEEEEGRDPDDDEEEDEETE. Over residues 793 to 803 the composition is skewed to basic and acidic residues; it reads PSEKGSSRDRA. The segment covering 832–842 has biased composition (pro residues); the sequence is DLPPPPPPPLA. Composition is skewed to basic and acidic residues over residues 861-877, 885-899, and 912-922; these read PSLEEQPSYKDSQKTKE, TKDDNSFSDKNKEHS, and FWRERSGEHTQ.

Belongs to the SKI family. As to quaternary structure, interacts with SMAD2 and SMAD3. Expressed in cerebellum, spinal cord and testis. Isoform 2 is present in cerebellum (at protein level).

The protein localises to the nucleus. Its subcellular location is the cytoplasm. Its function is as follows. Exhibits transcriptional repressor activity. Acts as a TGF-beta antagonist in the nervous system. In Homo sapiens (Human), this protein is SKI family transcriptional corepressor 2.